Consider the following 1556-residue polypeptide: Ras guanine nucleotide exchange factor G (1556 aa).

4 disordered regions span residues Ile19–Gly63, Leu93–Thr141, Ser163–Ser239, and Ala254–Ser296. Low complexity-rich tracts occupy residues Asn25 to Asn54 and Asn96 to Thr141. Residues Asp170–Ser186 are compositionally biased toward acidic residues. Residues Thr196 to Ser216 show a composition bias toward low complexity. Polar residues predominate over residues Asp256–Val271. Positions Asp279–Asn295 are enriched in low complexity. In terms of domain architecture, F-box 1 spans Asn307–Leu353. The interval Asn385–Asn416 is disordered. An F-box 2 domain is found at Val679–Leu726. Disordered stretches follow at residues Gln762 to Asn815 and Gly827 to Asn1101. Low complexity predominate over residues Gly827 to Gly848. Gly residues predominate over residues Ser849–Ser866. Composition is skewed to low complexity over residues Asn867–Ser880 and Phe888–Thr910. Polar residues predominate over residues Asn911–Val935. Composition is skewed to low complexity over residues Ser943–Ser957 and Pro972–Ile1053. Polar residues predominate over residues Val1059–Ala1076. A compositionally biased stretch (low complexity) spans Asn1077–Asn1101. Residues Met1116–Ser1244 enclose the N-terminal Ras-GEF domain. The tract at residues Ile1254–Gly1279 is disordered. Residues Lys1264–Gly1279 are compositionally biased toward gly residues. The region spanning Pro1317–Arg1548 is the Ras-GEF domain.

Functionally, promotes the exchange of Ras-bound GDP by GTP. This Dictyostelium discoideum (Social amoeba) protein is Ras guanine nucleotide exchange factor G (gefG).